The primary structure comprises 334 residues: Catabolite repressor/activator (334 aa).

The 58-residue stretch at 1 to 58 (MKLDEIARLAGVSRTTASYVINGKAKQYRVSDKTVEKVMAVVREHNYHPNAVAAGLRA) folds into the HTH lacI-type domain. Residues 3–22 (LDEIARLAGVSRTTASYVIN) constitute a DNA-binding region (H-T-H motif).

Homotetramer.

Global transcriptional regulator, which plays an important role in the regulation of carbon metabolism. The polypeptide is Catabolite repressor/activator (cra) (Salmonella typhimurium (strain LT2 / SGSC1412 / ATCC 700720)).